Consider the following 761-residue polypeptide: Phosphoribosylformylglycinamidine synthase subunit PurL (761 aa).

The active site involves H58. Positions 61 and 105 each coordinate ATP. E107 lines the Mg(2+) pocket. Residues S108–H111 and R130 each bind substrate. H109 acts as the Proton acceptor in catalysis. Mg(2+) is bound at residue D131. Q259 contributes to the substrate binding site. Residue D287 coordinates Mg(2+). Position 331 to 333 (E331 to Q333) interacts with substrate. Residues N519 and G556 each contribute to the ATP site. N557 is a binding site for Mg(2+). Residue S559 participates in substrate binding.

It belongs to the FGAMS family. As to quaternary structure, monomer. Part of the FGAM synthase complex composed of 1 PurL, 1 PurQ and 2 PurS subunits.

It is found in the cytoplasm. It catalyses the reaction N(2)-formyl-N(1)-(5-phospho-beta-D-ribosyl)glycinamide + L-glutamine + ATP + H2O = 2-formamido-N(1)-(5-O-phospho-beta-D-ribosyl)acetamidine + L-glutamate + ADP + phosphate + H(+). It functions in the pathway purine metabolism; IMP biosynthesis via de novo pathway; 5-amino-1-(5-phospho-D-ribosyl)imidazole from N(2)-formyl-N(1)-(5-phospho-D-ribosyl)glycinamide: step 1/2. Functionally, part of the phosphoribosylformylglycinamidine synthase complex involved in the purines biosynthetic pathway. Catalyzes the ATP-dependent conversion of formylglycinamide ribonucleotide (FGAR) and glutamine to yield formylglycinamidine ribonucleotide (FGAM) and glutamate. The FGAM synthase complex is composed of three subunits. PurQ produces an ammonia molecule by converting glutamine to glutamate. PurL transfers the ammonia molecule to FGAR to form FGAM in an ATP-dependent manner. PurS interacts with PurQ and PurL and is thought to assist in the transfer of the ammonia molecule from PurQ to PurL. This is Phosphoribosylformylglycinamidine synthase subunit PurL from Rhodococcus opacus (strain B4).